We begin with the raw amino-acid sequence, 332 residues long: Tyrosine--tRNA ligase (332 aa).

5 residues coordinate L-tyrosine: Tyr-32, Tyr-156, Gln-160, Asp-163, and Gln-178. Positions Lys-219 to Ser-223 match the 'KMSKS' region motif. Position 222 (Lys-222) interacts with ATP.

The protein belongs to the class-I aminoacyl-tRNA synthetase family. TyrS type 4 subfamily. Homodimer.

It is found in the cytoplasm. It carries out the reaction tRNA(Tyr) + L-tyrosine + ATP = L-tyrosyl-tRNA(Tyr) + AMP + diphosphate + H(+). In terms of biological role, catalyzes the attachment of tyrosine to tRNA(Tyr) in a two-step reaction: tyrosine is first activated by ATP to form Tyr-AMP and then transferred to the acceptor end of tRNA(Tyr). The sequence is that of Tyrosine--tRNA ligase from Thermoplasma acidophilum (strain ATCC 25905 / DSM 1728 / JCM 9062 / NBRC 15155 / AMRC-C165).